We begin with the raw amino-acid sequence, 197 residues long: Holliday junction branch migration complex subunit RuvA (197 aa).

Residues 1 to 65 (MISQVRGTIM…EDAWHLYGFA (65 aa)) are domain I. Residues 66 to 140 (HAYERAVFQK…DKIDAVGPAP (75 aa)) form a domain II region. The flexible linker stretch occupies residues 140 to 144 (PATGT). Positions 145-197 (APSPLGDDAVRALIALGYNQTEADRAVRAVVESGAPKDVSSLVRGALSRLTAK) are domain III.

Belongs to the RuvA family. In terms of assembly, homotetramer. Forms an RuvA(8)-RuvB(12)-Holliday junction (HJ) complex. HJ DNA is sandwiched between 2 RuvA tetramers; dsDNA enters through RuvA and exits via RuvB. An RuvB hexamer assembles on each DNA strand where it exits the tetramer. Each RuvB hexamer is contacted by two RuvA subunits (via domain III) on 2 adjacent RuvB subunits; this complex drives branch migration. In the full resolvosome a probable DNA-RuvA(4)-RuvB(12)-RuvC(2) complex forms which resolves the HJ.

Its subcellular location is the cytoplasm. The RuvA-RuvB-RuvC complex processes Holliday junction (HJ) DNA during genetic recombination and DNA repair, while the RuvA-RuvB complex plays an important role in the rescue of blocked DNA replication forks via replication fork reversal (RFR). RuvA specifically binds to HJ cruciform DNA, conferring on it an open structure. The RuvB hexamer acts as an ATP-dependent pump, pulling dsDNA into and through the RuvAB complex. HJ branch migration allows RuvC to scan DNA until it finds its consensus sequence, where it cleaves and resolves the cruciform DNA. The sequence is that of Holliday junction branch migration complex subunit RuvA from Gemmatimonas aurantiaca (strain DSM 14586 / JCM 11422 / NBRC 100505 / T-27).